The primary structure comprises 396 residues: Na(+)/H(+) antiporter NhaA (396 aa).

The next 11 membrane-spanning stretches (helical) occupy residues Ala14–Leu34, Leu59–Val79, Thr95–Phe115, Ala124–Leu144, Val154–Phe174, Gln178–Asn198, Ile205–His225, Ala254–Val274, Gly278–Val298, Ile328–Leu348, and Leu363–Ser383.

Belongs to the NhaA Na(+)/H(+) (TC 2.A.33) antiporter family.

The protein localises to the cell inner membrane. It catalyses the reaction Na(+)(in) + 2 H(+)(out) = Na(+)(out) + 2 H(+)(in). Na(+)/H(+) antiporter that extrudes sodium in exchange for external protons. This is Na(+)/H(+) antiporter NhaA from Aeromonas salmonicida (strain A449).